Consider the following 471-residue polypeptide: Glutamate--tRNA ligase (471 aa).

The 'HIGH' region signature appears at Pro9–Gly19. The Zn(2+) site is built by Cys98, Cys100, Cys125, and His127. Positions Lys237 to Arg241 match the 'KMSKS' region motif. Lys240 serves as a coordination point for ATP.

This sequence belongs to the class-I aminoacyl-tRNA synthetase family. Glutamate--tRNA ligase type 1 subfamily. Monomer. Zn(2+) serves as cofactor.

It localises to the cytoplasm. The catalysed reaction is tRNA(Glu) + L-glutamate + ATP = L-glutamyl-tRNA(Glu) + AMP + diphosphate. Its function is as follows. Catalyzes the attachment of glutamate to tRNA(Glu) in a two-step reaction: glutamate is first activated by ATP to form Glu-AMP and then transferred to the acceptor end of tRNA(Glu). The protein is Glutamate--tRNA ligase of Escherichia coli O1:K1 / APEC.